The chain runs to 515 residues: Bifunctional purine biosynthesis protein PurH (515 aa).

The MGS-like domain maps to 1 to 145 (MTKRALISVS…KNHASVTVVV (145 aa)).

It belongs to the PurH family.

The catalysed reaction is (6R)-10-formyltetrahydrofolate + 5-amino-1-(5-phospho-beta-D-ribosyl)imidazole-4-carboxamide = 5-formamido-1-(5-phospho-D-ribosyl)imidazole-4-carboxamide + (6S)-5,6,7,8-tetrahydrofolate. The enzyme catalyses IMP + H2O = 5-formamido-1-(5-phospho-D-ribosyl)imidazole-4-carboxamide. It participates in purine metabolism; IMP biosynthesis via de novo pathway; 5-formamido-1-(5-phospho-D-ribosyl)imidazole-4-carboxamide from 5-amino-1-(5-phospho-D-ribosyl)imidazole-4-carboxamide (10-formyl THF route): step 1/1. Its pathway is purine metabolism; IMP biosynthesis via de novo pathway; IMP from 5-formamido-1-(5-phospho-D-ribosyl)imidazole-4-carboxamide: step 1/1. The protein is Bifunctional purine biosynthesis protein PurH of Streptococcus agalactiae serotype Ia (strain ATCC 27591 / A909 / CDC SS700).